We begin with the raw amino-acid sequence, 482 residues long: MPIFVNTVYCKNILALYTTKKFKTIIEAIGGNIIVNSTILKKLSPYFRTHLRQKYTKNKDPVTRVCLDLDIHSLTSIVIYSYTGKVYIDSHNVVNLLRASILTSVEFIIYTCINFILRDFRKEYCIECYMMGIEYGLSNLLCHTKDFITKHFLELEDDIIDNFDYLSMKLILESDELNVPDEDYVVDFVIKWYMRRRNRLGNLLLLIKNVIRSNYLSPRGIHNVKWILDCNIIFHCDKQPRKSYKYPFIEYPMNMDQIIDIFHMCTSTHVGEVVYLIGGWMNNEIHNNAIAVNYISNNWIPIPPMNSPRLYASGIPANNKLYVVGGLPNPTSVERWFHGDAAWVNMPSLLKPRCNPAVASINNVIYVMGGHSETDTTTEYLLPNHDQWQFGPSTYYPHYKSCALVFGRRLFLVGRNAEFYCESSNTWTLIDDPIYPRDNPELIIVDNKLLLIGGFYRGSYIDTIEVYNNRTYSWNIWDGMEW.

Residues 20–90 form the BTB domain; the sequence is KKFKTIIEAI…SYTGKVYIDS (71 aa). In terms of domain architecture, BACK spans 125-222; sequence CIECYMMGIE…SNYLSPRGIH (98 aa). 5 Kelch repeats span residues 273–319, 320–363, 365–408, 410–447, and 448–482; these read VVYL…PANN, KLYV…SINN, IYVM…VFGR, LFLV…IVDN, and KLLL…GMEW.

This sequence belongs to the orthopoxvirus OPG047 family.

In terms of biological role, might have a role in the suppression of host immune response. This chain is Immune evasion protein OPG047 (OPG047), found in Cynomys gunnisoni (Gunnison's prairie dog).